A 280-amino-acid chain; its full sequence is Large ribosomal subunit protein uL2 (280 aa).

Disordered stretches follow at residues 1 to 58 (MAIR…GGGH) and 226 to 280 (MNPV…KHGR). Composition is skewed to basic residues over residues 37 to 58 (LHGH…GGGH) and 268 to 280 (IVRR…KHGR).

It belongs to the universal ribosomal protein uL2 family. Part of the 50S ribosomal subunit. Forms a bridge to the 30S subunit in the 70S ribosome.

Functionally, one of the primary rRNA binding proteins. Required for association of the 30S and 50S subunits to form the 70S ribosome, for tRNA binding and peptide bond formation. It has been suggested to have peptidyltransferase activity; this is somewhat controversial. Makes several contacts with the 16S rRNA in the 70S ribosome. In Mycobacterium avium (strain 104), this protein is Large ribosomal subunit protein uL2.